The sequence spans 316 residues: Ribosomal RNA small subunit methyltransferase H (316 aa).

Residues 35–37, aspartate 55, phenylalanine 79, aspartate 101, and glutamine 108 each bind S-adenosyl-L-methionine; that span reads GGH.

It belongs to the methyltransferase superfamily. RsmH family.

It localises to the cytoplasm. The catalysed reaction is cytidine(1402) in 16S rRNA + S-adenosyl-L-methionine = N(4)-methylcytidine(1402) in 16S rRNA + S-adenosyl-L-homocysteine + H(+). Specifically methylates the N4 position of cytidine in position 1402 (C1402) of 16S rRNA. The chain is Ribosomal RNA small subunit methyltransferase H from Vibrio parahaemolyticus serotype O3:K6 (strain RIMD 2210633).